The following is a 258-amino-acid chain: UPF0246 protein YE0603 (258 aa).

It belongs to the UPF0246 family.

The sequence is that of UPF0246 protein YE0603 from Yersinia enterocolitica serotype O:8 / biotype 1B (strain NCTC 13174 / 8081).